A 158-amino-acid polypeptide reads, in one-letter code: Transcription elongation factor GreA (158 aa).

Belongs to the GreA/GreB family.

In terms of biological role, necessary for efficient RNA polymerase transcription elongation past template-encoded arresting sites. The arresting sites in DNA have the property of trapping a certain fraction of elongating RNA polymerases that pass through, resulting in locked ternary complexes. Cleavage of the nascent transcript by cleavage factors such as GreA or GreB allows the resumption of elongation from the new 3'terminus. GreA releases sequences of 2 to 3 nucleotides. In Sinorhizobium medicae (strain WSM419) (Ensifer medicae), this protein is Transcription elongation factor GreA.